The primary structure comprises 366 residues: L-Ala-D/L-Glu epimerase (366 aa).

Substrate is bound by residues Arg-24, Thr-135, and Lys-160. The active-site Proton acceptor; specific for (R)-substrate epimerization is the Lys-162. Residues Asp-191, Glu-219, and Asp-244 each contribute to the Mg(2+) site. Lys-268 (proton acceptor; specific for (S)-substrate epimerization) is an active-site residue. Substrate is bound by residues Ser-296, Ile-298, Asp-321, and Asp-323.

Belongs to the mandelate racemase/muconate lactonizing enzyme family. As to quaternary structure, homooctamer; tetramer of dimers. Mg(2+) is required as a cofactor.

It carries out the reaction L-alanyl-L-glutamate = L-alanyl-D-glutamate. It participates in cell wall degradation; peptidoglycan degradation. In terms of biological role, catalyzes the epimerization of L-Ala-D-Glu to L-Ala-L-Glu and has probably a role in the metabolism of the murein peptide, of which L-Ala-D-Glu is a component. Is also able to catalyze the reverse reaction and the epimerization of the other Ala-X dipeptides L-Ala-L-Asp, L-Ala-L-Leu, L-Ala-L-Met, and L-Ala-L-Ser. Is not able to epimerize other L-Ala-X dipeptides. Is also active with L-Ser-L-Glu and, oddly, L-Pro-L-Glu, but not with L-Glu-L-Glu, L-Lys-L-Glu, L-Lys-L-Ala, or D-Ala-D-Ala. This Bacillus subtilis (strain 168) protein is L-Ala-D/L-Glu epimerase (ykfB).